The following is a 1008-amino-acid chain: PAN2-PAN3 deadenylation complex catalytic subunit PAN2 (1008 aa).

5 WD repeats span residues 29 to 68 (GQLT…PYSR), 110 to 149 (PSLG…VTRV), 158 to 198 (HMAG…FSDV), 200 to 236 (VQDN…AMAP), and 277 to 316 (AEVA…SFAE). The interval 314–449 (FAEFSAPTAF…TCTEASMSSK (136 aa)) is linker. One can recognise a USP domain in the interval 450-755 (KVPRLYRKLE…RTVMMVYAVG (306 aa)). Residues 808–976 (AIDAEFVVLK…EDSHTALLLY (169 aa)) enclose the Exonuclease domain. Residues Asp-810, Glu-812, Asp-915, and Asp-968 each coordinate a divalent metal cation.

Belongs to the peptidase C19 family. PAN2 subfamily. In terms of assembly, forms a heterotrimer with an asymmetric homodimer of the regulatory subunit PAN3 to form the poly(A)-nuclease (PAN) deadenylation complex. It depends on a divalent metal cation as a cofactor.

It localises to the cytoplasm. The enzyme catalyses Exonucleolytic cleavage of poly(A) to 5'-AMP.. Its activity is regulated as follows. Positively regulated by the regulatory subunit PAN3. In terms of biological role, catalytic subunit of the poly(A)-nuclease (PAN) deadenylation complex, one of two cytoplasmic mRNA deadenylases involved in mRNA turnover. PAN specifically shortens poly(A) tails of RNA and the activity is stimulated by poly(A)-binding protein PAB1. PAN deadenylation is followed by rapid degradation of the shortened mRNA tails by the CCR4-NOT complex. Deadenylated mRNAs are then degraded by two alternative mechanisms, namely exosome-mediated 3'-5' exonucleolytic degradation, or deadenylation-dependent mRNA decaping and subsequent 5'-3' exonucleolytic degradation by XRN1. May also be involved in post-transcriptional maturation of mRNA poly(A) tails. This chain is PAN2-PAN3 deadenylation complex catalytic subunit PAN2, found in Yarrowia lipolytica (strain CLIB 122 / E 150) (Yeast).